Here is a 293-residue protein sequence, read N- to C-terminus: MLRIGLFLLTNLAVLVVAGVVLSLLGVGNYRTADGLDLTNLLIFCAVFGFVGSFISLFLSKWMAKKTMGVQLIEQPRNADEKWLVDTVVELSQKAGIKTPEIGVFAAQESNAFATGWNRNDALVAVSLGLLQRFERDEVKAVLAHEIGHVANGDMITLSLIQGVVNTFVMFFARIIGDLVDRVIFKNEEGRGIAFFITTIVAELVLGILASMIVAAFSRYREYRADAAGATLADRGAMIRALQRLQAEMSAGVESPLPSSMRAFGISGGVRNLFASHPPLEARIQALRDSAHG.

The next 2 membrane-spanning stretches (helical) occupy residues 4-24 and 38-58; these read IGLF…VLSL and LTNL…ISLF. His-145 is a binding site for Zn(2+). Residue Glu-146 is part of the active site. His-149 serves as a coordination point for Zn(2+). A run of 2 helical transmembrane segments spans residues 156 to 176 and 193 to 213; these read ITLS…ARII and IAFF…ASMI. Residue Glu-222 coordinates Zn(2+).

Belongs to the peptidase M48B family. Requires Zn(2+) as cofactor.

It localises to the cell inner membrane. The polypeptide is Protease HtpX (Cellvibrio japonicus (strain Ueda107) (Pseudomonas fluorescens subsp. cellulosa)).